The chain runs to 81 residues: Large ribosomal subunit protein bL31 (81 aa).

The Zn(2+) site is built by Cys16, Cys18, Cys36, and Cys39.

It belongs to the bacterial ribosomal protein bL31 family. Type A subfamily. Part of the 50S ribosomal subunit. Zn(2+) is required as a cofactor.

Binds the 23S rRNA. The protein is Large ribosomal subunit protein bL31 of Rhodopirellula baltica (strain DSM 10527 / NCIMB 13988 / SH1).